A 336-amino-acid polypeptide reads, in one-letter code: Delta(1)-pyrroline-2-carboxylate reductase (336 aa).

Catalysis depends on Ser-47, which acts as the Charge relay system. Residue His-48 is the Proton donor of the active site. Arg-52 is a binding site for substrate. 120 to 124 (HFSAL) contributes to the NADP(+) binding site. Residue Thr-160 participates in substrate binding. 178-180 (DFA) provides a ligand contact to NADP(+). 186-187 (RG) is a substrate binding site. Catalysis depends on Asp-188, which acts as the Charge relay system. Residues 229-230 (HK) and 304-310 (RLPSQRR) each bind NADP(+).

This sequence belongs to the LDH2/MDH2 oxidoreductase family. As to quaternary structure, homodimer.

The enzyme catalyses L-proline + NAD(+) = 1-pyrroline-2-carboxylate + NADH + H(+). It carries out the reaction L-proline + NADP(+) = 1-pyrroline-2-carboxylate + NADPH + H(+). Catalyzes the reduction of Delta(1)-pyrroline-2-carboxylate (Pyr2C) to L-proline, using NADPH as the electron donor. May be involved in a degradation pathway that converts trans-3-hydroxy-L-proline (t3LHyp) to L-proline. This is Delta(1)-pyrroline-2-carboxylate reductase from Pseudomonas fluorescens (strain ATCC BAA-477 / NRRL B-23932 / Pf-5).